We begin with the raw amino-acid sequence, 85 residues long: Toxin AahP1005 (85 aa).

Residues 1 to 19 form the signal peptide; the sequence is MNYLVMISLALLFMTGVES. In terms of domain architecture, LCN-type CS-alpha/beta spans 21–83; the sequence is KDGYIVDDKN…VSTKKKGGCN (63 aa). Intrachain disulfides connect Cys31-Cys82, Cys35-Cys55, Cys41-Cys65, and Cys45-Cys67. Asn83 carries the post-translational modification Asparagine amide.

This sequence belongs to the long (4 C-C) scorpion toxin superfamily. Sodium channel inhibitor family. Alpha subfamily. In terms of tissue distribution, expressed by the venom gland.

It localises to the secreted. Alpha toxins bind voltage-independently at site-3 of sodium channels (Nav) and inhibit the inactivation of the activated channels, thereby blocking neuronal transmission. This is Toxin AahP1005 from Androctonus australis (Sahara scorpion).